Consider the following 258-residue polypeptide: 5'-nucleotidase SurE (258 aa).

Asp9, Asp10, Ser42, and Asn96 together coordinate a divalent metal cation.

The protein belongs to the SurE nucleotidase family. It depends on a divalent metal cation as a cofactor.

It localises to the cytoplasm. It carries out the reaction a ribonucleoside 5'-phosphate + H2O = a ribonucleoside + phosphate. Nucleotidase that shows phosphatase activity on nucleoside 5'-monophosphates. This Campylobacter jejuni subsp. jejuni serotype O:6 (strain 81116 / NCTC 11828) protein is 5'-nucleotidase SurE.